The primary structure comprises 585 residues: A-type ATP synthase subunit A (585 aa).

237–244 is a binding site for ATP; the sequence is GPFGSGKT.

Belongs to the ATPase alpha/beta chains family. Has multiple subunits with at least A(3), B(3), C, D, E, F, H, I and proteolipid K(x).

It localises to the cell membrane. It carries out the reaction ATP + H2O + 4 H(+)(in) = ADP + phosphate + 5 H(+)(out). In terms of biological role, component of the A-type ATP synthase that produces ATP from ADP in the presence of a proton gradient across the membrane. The A chain is the catalytic subunit. This chain is A-type ATP synthase subunit A, found in Natronomonas pharaonis (strain ATCC 35678 / DSM 2160 / CIP 103997 / JCM 8858 / NBRC 14720 / NCIMB 2260 / Gabara) (Halobacterium pharaonis).